The sequence spans 238 residues: Uridylate kinase (238 aa).

Position 12 to 15 (12 to 15) interacts with ATP; that stretch reads KLSG. Glycine 54 contributes to the UMP binding site. ATP contacts are provided by glycine 55 and arginine 59. Residues aspartate 74 and 135 to 142 each bind UMP; that span reads TGNPYFTT. 3 residues coordinate ATP: threonine 162, tyrosine 168, and aspartate 171.

This sequence belongs to the UMP kinase family. In terms of assembly, homohexamer.

It is found in the cytoplasm. The catalysed reaction is UMP + ATP = UDP + ADP. The protein operates within pyrimidine metabolism; CTP biosynthesis via de novo pathway; UDP from UMP (UMPK route): step 1/1. Inhibited by UTP. Its function is as follows. Catalyzes the reversible phosphorylation of UMP to UDP. The sequence is that of Uridylate kinase from Oleidesulfovibrio alaskensis (strain ATCC BAA-1058 / DSM 17464 / G20) (Desulfovibrio alaskensis).